The sequence spans 432 residues: Adenylosuccinate synthetase (432 aa).

Residues 12–18 and 40–42 each bind GTP; these read GDEGKGK and GHT. Residue aspartate 13 is the Proton acceptor of the active site. Mg(2+) is bound by residues aspartate 13 and glycine 40. Residues 13-16, 38-41, threonine 132, arginine 146, glutamine 226, threonine 241, and arginine 305 contribute to the IMP site; these read DEGK and NAGH. Histidine 41 serves as the catalytic Proton donor. Residue 301-307 coordinates substrate; sequence VVTGRKR. GTP-binding positions include arginine 307, 333-335, and 415-417; these read KLD and STS.

It belongs to the adenylosuccinate synthetase family. In terms of assembly, homodimer. Mg(2+) serves as cofactor.

It is found in the cytoplasm. The catalysed reaction is IMP + L-aspartate + GTP = N(6)-(1,2-dicarboxyethyl)-AMP + GDP + phosphate + 2 H(+). It participates in purine metabolism; AMP biosynthesis via de novo pathway; AMP from IMP: step 1/2. Functionally, plays an important role in the de novo pathway of purine nucleotide biosynthesis. Catalyzes the first committed step in the biosynthesis of AMP from IMP. This Rhizobium etli (strain CIAT 652) protein is Adenylosuccinate synthetase.